Reading from the N-terminus, the 122-residue chain is MSAEYGQRQQPGGRGGRSSGNKKSKKRCRRKESYSMYIYKVLKQVHPDIGISAKAMSIMNSFVNDVFEQLACEAARLAQYSGRTTLTSREVQTAVRLLLPGELAKHAVSEGTKAVTKYTSSK.

Positions 1 to 30 are disordered; that stretch reads MSAEYGQRQQPGGRGGRSSGNKKSKKRCRR. Over residues 20–30 the composition is skewed to basic residues; sequence GNKKSKKRCRR. Lys-31 carries the N6-(2-hydroxyisobutyryl)lysine; alternate modification. Lys-31 carries the N6-(beta-hydroxybutyryl)lysine; alternate modification. N6-crotonyllysine; alternate is present on Lys-31. N6-glutaryllysine; alternate is present on Lys-31. Lys-31 bears the N6-succinyllysine; alternate mark. Lys-31 is covalently cross-linked (Glycyl lysine isopeptide (Lys-Gly) (interchain with G-Cter in ubiquitin); alternate). Ser-33 carries the post-translational modification Phosphoserine. N6-(2-hydroxyisobutyryl)lysine; alternate is present on residues Lys-40, Lys-43, and Lys-54. Residues Lys-40 and Lys-43 each carry the N6-glutaryllysine; alternate modification. Position 40 is an N6-lactoyllysine; alternate (Lys-40). N6-methyllysine is present on Lys-43. The residue at position 43 (Lys-43) is an N6-methyllysine; alternate. N6,N6-dimethyllysine is present on Lys-54. Lys-54 carries the N6,N6-dimethyllysine; alternate modification. Arg-76 carries the dimethylated arginine modification. Ser-81 bears the Phosphoserine mark. Omega-N-methylarginine is present on residues Arg-83 and Arg-89. An N6-(2-hydroxyisobutyryl)lysine; alternate modification is found at Lys-105. Lys-105 bears the N6-glutaryllysine; alternate mark. An N6-lactoyllysine; alternate modification is found at Lys-105. At Lys-105 the chain carries N6-methyllysine. Position 105 is an N6-methyllysine; alternate (Lys-105). Ser-109 carries an O-linked (GlcNAc) serine glycan. Phosphothreonine is present on Thr-112. 2 positions are modified to N6-(2-hydroxyisobutyryl)lysine; alternate: Lys-113 and Lys-117. Lys-113 and Lys-117 each carry N6-(beta-hydroxybutyryl)lysine; alternate. N6-glutaryllysine; alternate is present on residues Lys-113 and Lys-117. Residues Lys-113 and Lys-117 each carry the N6-succinyllysine; alternate modification. Lys-113 is modified (N6-lactoyllysine; alternate). Lys-113 carries the post-translational modification N6-malonyllysine; alternate. Lys-113 is modified (N6-methylated lysine; alternate). Lys-117 is covalently cross-linked (Glycyl lysine isopeptide (Lys-Gly) (interchain with G-Cter in ubiquitin); alternate).

It belongs to the histone H2B family. The nucleosome is a histone octamer containing two molecules each of H2A, H2B, H3 and H4 assembled in one H3-H4 heterotetramer and two H2A-H2B heterodimers. The octamer wraps approximately 147 bp of DNA.

The protein localises to the chromosome. The protein resides in the nucleus. Core component of nucleosome. Nucleosomes wrap and compact DNA into chromatin, limiting DNA accessibility to the cellular machineries which require DNA as a template. Histones thereby play a central role in transcription regulation, DNA repair, DNA replication and chromosomal stability. DNA accessibility is regulated via a complex set of post-translational modifications of histones, also called histone code, and nucleosome remodeling. This Homo sapiens (Human) protein is Histone H2B type 2-K1.